The primary structure comprises 353 residues: Photosystem II D2 protein (353 aa).

Thr-2 carries the post-translational modification N-acetylthreonine. Thr-2 is subject to Phosphothreonine. Residues 41 to 61 (CAYFALGGWFTGTTFVTSWYT) traverse the membrane as a helical segment. His-118 provides a ligand contact to chlorophyll a. Residues 125–141 (GFMLRQFELARSVQLRP) traverse the membrane as a helical segment. Residues Gln-130 and Asn-143 each coordinate pheophytin a. Residues 153-166 (VFVSVFLIYPLGQS) form a helical membrane-spanning segment. Position 198 (His-198) interacts with chlorophyll a. The helical transmembrane segment at 208 to 228 (AALLCAIHGATVENTLFEDGD) threads the bilayer. Residues His-215 and Phe-262 each contribute to the a plastoquinone site. A Fe cation-binding site is contributed by His-215. Residue His-269 coordinates Fe cation. Residues 279 to 295 (GLWMSALGVVGLALNLR) traverse the membrane as a helical segment.

It belongs to the reaction center PufL/M/PsbA/D family. PSII is composed of 1 copy each of membrane proteins PsbA, PsbB, PsbC, PsbD, PsbE, PsbF, PsbH, PsbI, PsbJ, PsbK, PsbL, PsbM, PsbT, PsbX, PsbY, PsbZ, Psb30/Ycf12, at least 3 peripheral proteins of the oxygen-evolving complex and a large number of cofactors. It forms dimeric complexes. Requires The D1/D2 heterodimer binds P680, chlorophylls that are the primary electron donor of PSII, and subsequent electron acceptors. It shares a non-heme iron and each subunit binds pheophytin, quinone, additional chlorophylls, carotenoids and lipids. There is also a Cl(-1) ion associated with D1 and D2, which is required for oxygen evolution. The PSII complex binds additional chlorophylls, carotenoids and specific lipids. as cofactor.

The protein resides in the plastid. Its subcellular location is the chloroplast thylakoid membrane. The enzyme catalyses 2 a plastoquinone + 4 hnu + 2 H2O = 2 a plastoquinol + O2. In terms of biological role, photosystem II (PSII) is a light-driven water:plastoquinone oxidoreductase that uses light energy to abstract electrons from H(2)O, generating O(2) and a proton gradient subsequently used for ATP formation. It consists of a core antenna complex that captures photons, and an electron transfer chain that converts photonic excitation into a charge separation. The D1/D2 (PsbA/PsbD) reaction center heterodimer binds P680, the primary electron donor of PSII as well as several subsequent electron acceptors. D2 is needed for assembly of a stable PSII complex. The chain is Photosystem II D2 protein from Nandina domestica (Heavenly bamboo).